The primary structure comprises 123 residues: Large ribosomal subunit protein uL14 (123 aa).

The protein belongs to the universal ribosomal protein uL14 family. In terms of assembly, part of the 50S ribosomal subunit. Forms a cluster with proteins L3 and L19. In the 70S ribosome, L14 and L19 interact and together make contacts with the 16S rRNA in bridges B5 and B8.

Its function is as follows. Binds to 23S rRNA. Forms part of two intersubunit bridges in the 70S ribosome. The sequence is that of Large ribosomal subunit protein uL14 from Histophilus somni (strain 129Pt) (Haemophilus somnus).